The following is a 34-amino-acid chain: MSDIN-like toxin proprotein 3 (34 aa).

Residues 1–10 (MSDINVIRAP) constitute a propeptide that is removed on maturation. A cross-link (cyclopeptide (Leu-Pro)) is located at residues 11–18 (LLILSILP). The propeptide occupies 19-34 (CVGDDIEVLRRGEGLS).

This sequence belongs to the MSDIN fungal toxin family. Processed by the macrocyclase-peptidase enzyme POPB to yield a toxic cyclic octapeptide. POPB first removes 10 residues from the N-terminus. Conformational trapping of the remaining peptide forces the enzyme to release this intermediate rather than proceed to macrocyclization. The enzyme rebinds the remaining peptide in a different conformation and catalyzes macrocyclization of the N-terminal 8 residues. As to expression, expressed in basidiocarps.

Probable toxin that belongs to the MSDIN-like toxin family responsible for a large number of food poisoning cases and deaths. This chain is MSDIN-like toxin proprotein 3, found in Amanita exitialis (Guangzhou destroying angel).